An 86-amino-acid polypeptide reads, in one-letter code: Small ribosomal subunit protein bS18c (86 aa).

This sequence belongs to the bacterial ribosomal protein bS18 family. Part of the 30S ribosomal subunit.

It localises to the plastid. It is found in the chloroplast. The chain is Small ribosomal subunit protein bS18c from Pseudotsuga menziesii (Douglas-fir).